We begin with the raw amino-acid sequence, 479 residues long: MAQHTVYFPDAFLTQMREAMPSTLSFDDFLAACQRPLRRSIRVNTLKISVADFLQLTAPYGWTLTPIPWCEEGFWIERDNEDALPLGSTAEHLSGLFYIQEASSMLPVAALFADGNAPQRVMDVAAAPGSKTTQIAARMNNEGAILANEFSASRVKVLHANISRCGISNVALTHFDGRVFGAALPEMFDAILLDAPCSGEGVVRKDPDALKNWSPESNQEIAATQRELIDSAFHALRPGGTLVYSTCTLNREENEAVCLWLKETYPDAVEFLPLGDLFPGANKALTEEGFLHVFPQIYDCEGFFVARLRKTQAIPVLPAPKYKVGNFPFSPVKDREAGQIRQAAAGVGLNWDGNLRLWQRDKELWLFPVGIEALIGKVRFSRLGIKLAETHNKGYRWQHEAVIALASPDNVNAFELTPQEAEEWYRGRDVYPQAAPVADDVLVTFQHQPIGLAKRIGSRLKNSYPRELVRDGKLFTGNA.

S-adenosyl-L-methionine-binding positions include A125–K131, E149, D176, and D194. C247 acts as the Nucleophile in catalysis.

It belongs to the class I-like SAM-binding methyltransferase superfamily. RsmB/NOP family.

The protein resides in the cytoplasm. It catalyses the reaction cytidine(1407) in 16S rRNA + S-adenosyl-L-methionine = 5-methylcytidine(1407) in 16S rRNA + S-adenosyl-L-homocysteine + H(+). Its function is as follows. Specifically methylates the cytosine at position 1407 (m5C1407) of 16S rRNA. This chain is Ribosomal RNA small subunit methyltransferase F, found in Escherichia coli O7:K1 (strain IAI39 / ExPEC).